Consider the following 780-residue polypeptide: Translation initiation factor IF-2 (780 aa).

The tract at residues 44 to 194 is disordered; that stretch reads RQLDNAVDGT…TPPKPKELPE (151 aa). Residues 53-65 show a composition bias toward basic and acidic residues; the sequence is TNKKAEAPKKETT. Over residues 66–81 the composition is skewed to polar residues; it reads SNENGNSKGPNKPNMT. 2 stretches are compositionally biased toward low complexity: residues 82 to 93 and 117 to 168; these read NSNEKSNKPNKP and ANTS…NNKG. One can recognise a tr-type G domain in the interval 281 to 450; sequence ERPPVVTIMG…LLVSEVEELK (170 aa). The tract at residues 290 to 297 is G1; that stretch reads GHVDHGKT. Position 290–297 (290–297) interacts with GTP; the sequence is GHVDHGKT. A G2 region spans residues 315 to 319; it reads GITQH. The G3 stretch occupies residues 336–339; the sequence is DTPG. GTP contacts are provided by residues 336–340 and 390–393; these read DTPGH and NKID. The G4 stretch occupies residues 390-393; it reads NKID. The interval 426–428 is G5; it reads SAK.

It belongs to the TRAFAC class translation factor GTPase superfamily. Classic translation factor GTPase family. IF-2 subfamily.

The protein resides in the cytoplasm. One of the essential components for the initiation of protein synthesis. Protects formylmethionyl-tRNA from spontaneous hydrolysis and promotes its binding to the 30S ribosomal subunits. Also involved in the hydrolysis of GTP during the formation of the 70S ribosomal complex. The sequence is that of Translation initiation factor IF-2 from Listeria welshimeri serovar 6b (strain ATCC 35897 / DSM 20650 / CCUG 15529 / CIP 8149 / NCTC 11857 / SLCC 5334 / V8).